Reading from the N-terminus, the 167-residue chain is MRQTIKYEFWVGLFLLLGIGALVFLGLRVANVQGFAETKSYTVTATFDNIGGLKVRAPLKIGGVVIGRVSAITLDEKSYLPKVSIAINQEYNEIPENSSLSIKTSGLLGEQYIALTMGFDDGDTAMLKNGSQIQDTTSAMVLEDLIGQFLYGSKKSDGNEKSESTEQ.

Over 1–6 (MRQTIK) the chain is Cytoplasmic. A helical; Signal-anchor for type II membrane protein transmembrane segment spans residues 7–27 (YEFWVGLFLLLGIGALVFLGL). Over 28–167 (RVANVQGFAE…GNEKSESTEQ (140 aa)) the chain is Periplasmic. The segment at 40-118 (SYTVTATFDN…GEQYIALTMG (79 aa)) is MCE/MlaD.

The protein belongs to the MlaD family. In terms of assembly, the complex is composed of two ATP-binding proteins (MlaF), two transmembrane proteins (MlaE), two cytoplasmic solute-binding proteins (MlaB) and six periplasmic solute-binding proteins (MlaD).

The protein resides in the cell inner membrane. Functionally, part of the ABC transporter complex MlaFEDB, which is involved in a phospholipid transport pathway that maintains lipid asymmetry in the outer membrane by retrograde trafficking of phospholipids from the outer membrane to the inner membrane. MlaD functions in substrate binding with strong affinity for phospholipids and modulates ATP hydrolytic activity of the complex. The sequence is that of Intermembrane phospholipid transport system binding protein MlaD from Haemophilus influenzae (strain ATCC 51907 / DSM 11121 / KW20 / Rd).